We begin with the raw amino-acid sequence, 431 residues long: Interleukin-11 receptor subunit alpha (431 aa).

A signal peptide spans 1 to 23 (MSSSRSGLTRVLVAVATALVSSS). The Extracellular segment spans residues 24–371 (TPCPQAWGPP…DPLEQVAVLA (348 aa)). The Ig-like C2-type domain occupies 27 to 110 (PQAWGPPGVQ…FGGMVTLKLG (84 aa)). Cystine bridges form between cysteine 48-cysteine 94, cysteine 120-cysteine 130, and cysteine 170-cysteine 180. Fibronectin type-III domains follow at residues 112–219 (PPAR…LRPD) and 220–317 (PPQG…TPST). Asparagine 127 carries an N-linked (GlcNAc...) asparagine glycan. Positions 151-170 (KTLPGAESQRESPSTGPWPC) are disordered. A glycan (N-linked (GlcNAc...) asparagine) is linked at asparagine 194. The WSXWS motif motif lies at 304 to 308 (WSAWS). Residues 310-360 (EAWGTPSTGPLRDEVPDGSRGHEQKLEAAAQEDSPAPPSPSLQPDPRPLDH) form a disordered region. The span at 320–335 (LRDEVPDGSRGHEQKL) shows a compositional bias: basic and acidic residues. Over residues 344-355 (PAPPSPSLQPDP) the composition is skewed to pro residues. A helical transmembrane segment spans residues 372–392 (SLGIFSFLGLAVGALALGLWL). Residues 393 to 431 (RLRRSGKDGPQKPGFLAPMIPGDKLPGIPNLQRTPENFS) are Cytoplasmic-facing. The disordered stretch occupies residues 402-431 (PQKPGFLAPMIPGDKLPGIPNLQRTPENFS).

The protein belongs to the type I cytokine receptor family. Type 3 subfamily. In terms of assembly, on IL11 binding, forms a multimer complex with IL6ST/gp130. Post-translationally, a short soluble form is also released from the membrane by proteolysis. The sIL11RA is formed either by limited proteolysis of membrane-bound receptors, a process referred to as ectodomain shedding, or directly secreted from the cells after alternative mRNA splicing. mIL11RA is cleaved by the proteases ADAM10, ELANE and PRTN3.

It localises to the membrane. The protein resides in the secreted. Receptor for interleukin-11 (IL11). The receptor systems for IL6, LIF, OSM, CNTF, IL11 and CT1 can utilize IL6ST for initiating signal transmission. The IL11/IL11RA/IL6ST complex may be involved in the control of proliferation and/or differentiation of skeletogenic progenitor or other mesenchymal cells. Essential for the normal development of craniofacial bones and teeth. Restricts suture fusion and tooth number. Functionally, soluble form of IL11 receptor (sIL11RA) that acts as an agonist of IL11 activity. The IL11:sIL11RA complex binds to IL6ST/gp130 on cell surfaces and induces signaling also on cells that do not express membrane-bound IL11RA in a process called IL11 trans-signaling. The chain is Interleukin-11 receptor subunit alpha from Rattus norvegicus (Rat).